A 339-amino-acid polypeptide reads, in one-letter code: MKRKTLTQYLVEQQRSAQALGPEVRLLIEVVARACKAISHAVSKGALGGVLGSLESENVQGEVQKKLDVLSNEILLEANEWGGHLAAMASEEMETIHLIPNRYPKGEYLLLFDPLDGSSNIDVNVSIGTIFSVLRAPHRVAGADVCEQDFLQPGSQQVAAGYAVYGPQTMLVLTIGNGVVGFTLDREMGSWVLTHESMRIPEDTKEFAINMSNMRHWAPPVKRYIDECLAGKTGPLGKDYNMRWIASMVADVHRILTRGGIFMYPWDAREPGKAGKLRLMYEANPMGLIVEQAGGAAIDGTGRILDIQPDKLHQRVSVILGSKNEVERVGRYHAEAHAS.

4 residues coordinate Mg(2+): E91, D113, L115, and D116. Residues 116 to 119 (DGSS), N210, and K276 each bind substrate. A Mg(2+)-binding site is contributed by E282.

It belongs to the FBPase class 1 family. As to quaternary structure, homotetramer. The cofactor is Mg(2+).

The protein resides in the cytoplasm. The catalysed reaction is beta-D-fructose 1,6-bisphosphate + H2O = beta-D-fructose 6-phosphate + phosphate. It participates in carbohydrate biosynthesis; gluconeogenesis. This is Fructose-1,6-bisphosphatase class 1 from Bordetella bronchiseptica (strain ATCC BAA-588 / NCTC 13252 / RB50) (Alcaligenes bronchisepticus).